Consider the following 70-residue polypeptide: Large ribosomal subunit protein eL38 (70 aa).

Lys4 is covalently cross-linked (Glycyl lysine isopeptide (Lys-Gly) (interchain with G-Cter in SUMO2)). Lys9 is subject to N6-acetyllysine; alternate. Lys9 is covalently cross-linked (Glycyl lysine isopeptide (Lys-Gly) (interchain with G-Cter in SUMO2); alternate). The residue at position 67 (Lys67) is an N6-acetyllysine.

This sequence belongs to the eukaryotic ribosomal protein eL38 family. As to quaternary structure, component of the large ribosomal subunit.

The protein resides in the cytoplasm. Component of the large ribosomal subunit. The ribosome is a large ribonucleoprotein complex responsible for the synthesis of proteins in the cell. In Homo sapiens (Human), this protein is Large ribosomal subunit protein eL38 (RPL38).